A 23-amino-acid polypeptide reads, in one-letter code: Apolipophorin-3 (23 aa).

This sequence belongs to the insect apolipophorin-3 family. In terms of assembly, equilibrium between a soluble monomer and a bound lipoprotein form. Apolipophorin-3 associates with lipophorin during lipid loading until each particle contains 9 or 14 molecules of apolipophorin-3. Hemolymph.

It localises to the secreted. Functionally, assists in the loading of diacylglycerol, generated from triacylglycerol stores in the fat body through the action of adipokinetic hormone, into lipophorin, the hemolymph lipoprotein. It increases the lipid carrying capacity of lipophorin by covering the expanding hydrophobic surface resulting from diacylglycerol uptake. It thus plays a critical role in the transport of lipids during flight in several species of insects. The chain is Apolipophorin-3 from Melanoplus sanguinipes (Migratory grasshopper).